Consider the following 151-residue polypeptide: Deoxyuridine 5'-triphosphate nucleotidohydrolase (151 aa).

Residues 70–72, Asn83, 87–89, and Met97 each bind substrate; these read RSG and LID.

It belongs to the dUTPase family. As to quaternary structure, homotrimer. Mg(2+) is required as a cofactor.

The catalysed reaction is dUTP + H2O = dUMP + diphosphate + H(+). It participates in pyrimidine metabolism; dUMP biosynthesis; dUMP from dCTP (dUTP route): step 2/2. In terms of biological role, this enzyme is involved in nucleotide metabolism: it produces dUMP, the immediate precursor of thymidine nucleotides and it decreases the intracellular concentration of dUTP so that uracil cannot be incorporated into DNA. This chain is Deoxyuridine 5'-triphosphate nucleotidohydrolase, found in Escherichia coli O7:K1 (strain IAI39 / ExPEC).